The following is a 61-amino-acid chain: Translational regulator CsrA (61 aa).

The protein belongs to the CsrA/RsmA family. As to quaternary structure, homodimer; the beta-strands of each monomer intercalate to form a hydrophobic core, while the alpha-helices form wings that extend away from the core.

The protein resides in the cytoplasm. Its function is as follows. A key translational regulator that binds mRNA to regulate translation initiation and/or mRNA stability. Mediates global changes in gene expression, shifting from rapid growth to stress survival by linking envelope stress, the stringent response and the catabolite repression systems. Usually binds in the 5'-UTR; binding at or near the Shine-Dalgarno sequence prevents ribosome-binding, repressing translation, binding elsewhere in the 5'-UTR can activate translation and/or stabilize the mRNA. Its function is antagonized by small RNA(s). In Glaesserella parasuis serovar 5 (strain SH0165) (Haemophilus parasuis), this protein is Translational regulator CsrA.